The following is a 390-amino-acid chain: MTTATAIVAGHGLALRRSLPLPNPPGRATTSVSLSARPVTPARRMIVPASPSPRSPRRCRSISSESSTEASAAADIADEEVEAENKVDPQAEVCYLDPDVDPESIREWELDFCSRPILDARGKKVWELVVCDATLSLQFTRYFPNNAINSVTLRDALASVSEALGVPMPDRVRFFRSQMQTIITRACGDLGVKAVPSRRCVSLLLWLEERYEVVYSRHPGFQAGTRPLLALDNPFPTTLPENLFGDKWAFVQLPFSAVREEVESLERRYAFGAGLDLELLGFELDDTTLVPGVAVESSRAKPLAAWMNGLEICAMEADTGRASLILSAGVSTRYVYSGYQKTAASTQEAEAWEAAKKACGGLHFLAIQENLNSDGCVGFWLLLDLPPPPV.

A chloroplast-targeting transit peptide spans Met1–Glu69. The interval Arg16–Asn85 is disordered. Residues Ser61–Asp75 show a composition bias toward low complexity.

The protein resides in the plastid. It is found in the chloroplast. Nuclear genome-encoded factor involved in the biogenesis of photosystem I (PSI). Required for the accumulation of PSI during plant development. Does not seem to be required for the translation of mRNAs of the PSI subunits. The chain is Protein TAB2 homolog, chloroplastic from Zea mays (Maize).